The following is a 542-amino-acid chain: CTP synthase (542 aa).

Residues 1–265 are amidoligase domain; that stretch reads MARYVFITGG…DNEVLAAFGI (265 aa). S13 is a binding site for CTP. Position 13 (S13) interacts with UTP. Residues 14–19 and D71 each bind ATP; that span reads SLGKGI. Mg(2+)-binding residues include D71 and E139. Residues 146-148, 186-191, and K222 each bind CTP; these read DIE and KTKPTQ. Residues 186-191 and K222 contribute to the UTP site; that span reads KTKPTQ. The 251-residue stretch at 291–541 folds into the Glutamine amidotransferase type-1 domain; it reads TIAIVGKYTG…IEAALEQSRL (251 aa). G353 lines the L-glutamine pocket. C380 serves as the catalytic Nucleophile; for glutamine hydrolysis. L-glutamine-binding positions include 381–384, E404, and R469; that span reads FGMQ. Active-site residues include H514 and E516.

Belongs to the CTP synthase family. Homotetramer.

It carries out the reaction UTP + L-glutamine + ATP + H2O = CTP + L-glutamate + ADP + phosphate + 2 H(+). The enzyme catalyses L-glutamine + H2O = L-glutamate + NH4(+). It catalyses the reaction UTP + NH4(+) + ATP = CTP + ADP + phosphate + 2 H(+). Its pathway is pyrimidine metabolism; CTP biosynthesis via de novo pathway; CTP from UDP: step 2/2. Its activity is regulated as follows. Allosterically activated by GTP, when glutamine is the substrate; GTP has no effect on the reaction when ammonia is the substrate. The allosteric effector GTP functions by stabilizing the protein conformation that binds the tetrahedral intermediate(s) formed during glutamine hydrolysis. Inhibited by the product CTP, via allosteric rather than competitive inhibition. Functionally, catalyzes the ATP-dependent amination of UTP to CTP with either L-glutamine or ammonia as the source of nitrogen. Regulates intracellular CTP levels through interactions with the four ribonucleotide triphosphates. This chain is CTP synthase, found in Rhizobium meliloti (strain 1021) (Ensifer meliloti).